A 151-amino-acid polypeptide reads, in one-letter code: 3-hydroxyacyl-[acyl-carrier-protein] dehydratase FabZ (151 aa).

The active site involves histidine 56.

Belongs to the thioester dehydratase family. FabZ subfamily.

The protein resides in the cytoplasm. The enzyme catalyses a (3R)-hydroxyacyl-[ACP] = a (2E)-enoyl-[ACP] + H2O. Involved in unsaturated fatty acids biosynthesis. Catalyzes the dehydration of short chain beta-hydroxyacyl-ACPs and long chain saturated and unsaturated beta-hydroxyacyl-ACPs. The sequence is that of 3-hydroxyacyl-[acyl-carrier-protein] dehydratase FabZ from Rhodopseudomonas palustris (strain HaA2).